Here is a 168-residue protein sequence, read N- to C-terminus: Small ribosomal subunit protein bS16 (168 aa).

Residues 110–168 (LAEAEGGPSNEATQPKKKKAPAKKAASDIEATADPAGNADKSEPAAEGEDATVAGATEG) form a disordered region.

It belongs to the bacterial ribosomal protein bS16 family.

This is Small ribosomal subunit protein bS16 from Mycobacterium sp. (strain JLS).